The following is a 427-amino-acid chain: Glutamate-1-semialdehyde 2,1-aminomutase (427 aa).

Position 264 is an N6-(pyridoxal phosphate)lysine (Lys-264).

Belongs to the class-III pyridoxal-phosphate-dependent aminotransferase family. HemL subfamily. As to quaternary structure, homodimer. Requires pyridoxal 5'-phosphate as cofactor.

It localises to the cytoplasm. It catalyses the reaction (S)-4-amino-5-oxopentanoate = 5-aminolevulinate. It functions in the pathway porphyrin-containing compound metabolism; protoporphyrin-IX biosynthesis; 5-aminolevulinate from L-glutamyl-tRNA(Glu): step 2/2. The polypeptide is Glutamate-1-semialdehyde 2,1-aminomutase (Clostridium botulinum (strain Alaska E43 / Type E3)).